The chain runs to 802 residues: Elongation factor G, mitochondrial (802 aa).

The transit peptide at 1-24 (MRCPSLARLPNRALSGLTRSPVRL) directs the protein to the mitochondrion. Residues 100-387 (SRLRNIGIAA…GVIDYLPNPS (288 aa)) form the tr-type G domain. GTP contacts are provided by residues 109–116 (AHIDSGKT), 185–189 (DTPGH), and 239–242 (NKMD).

The protein belongs to the TRAFAC class translation factor GTPase superfamily. Classic translation factor GTPase family. EF-G/EF-2 subfamily.

The protein resides in the mitochondrion. It functions in the pathway protein biosynthesis; polypeptide chain elongation. In terms of biological role, mitochondrial GTPase that catalyzes the GTP-dependent ribosomal translocation step during translation elongation. During this step, the ribosome changes from the pre-translocational (PRE) to the post-translocational (POST) state as the newly formed A-site-bound peptidyl-tRNA and P-site-bound deacylated tRNA move to the P and E sites, respectively. Catalyzes the coordinated movement of the two tRNA molecules, the mRNA and conformational changes in the ribosome. The sequence is that of Elongation factor G, mitochondrial (mef1) from Aspergillus fumigatus (strain CBS 144.89 / FGSC A1163 / CEA10) (Neosartorya fumigata).